An 801-amino-acid polypeptide reads, in one-letter code: Glycerol-3-phosphate acyltransferase 2, mitochondrial (801 aa).

The interval 1-24 (METMLKSNPQMQQRNNHSGQETSL) is disordered. At 1 to 305 (METMLKSNPQ…PGPRLSALGQ (305 aa)) the chain is on the cytoplasmic side. The tract at residues 180–290 (QLHKGQMKMV…SGQPLLIFLE (111 aa)) is acyltransferase. The HXXXXD motif signature appears at 205–210 (HKSLLD). A helical transmembrane segment spans residues 306–332 (AWLGLVVQAVQAGIVPDATLVPVATAY). Over 333–449 (DLVPDAPCNM…QLLVRRLSRH (117 aa)) the chain is Mitochondrial intermembrane. Residues 450–472 (VLSASVASSAVMSTAIMATLLLL) traverse the membrane as a helical segment. Topologically, residues 473 to 795 (KHQKGVVLSQ…DNQDKLEQFI (323 aa)) are cytoplasmic.

It belongs to the GPAT/DAPAT family. As to quaternary structure, interacts with PIWIL2. As to expression, expressed in spermatocytes and spermatides.

Its subcellular location is the mitochondrion outer membrane. It catalyses the reaction sn-glycerol 3-phosphate + an acyl-CoA = a 1-acyl-sn-glycero-3-phosphate + CoA. The catalysed reaction is a 1-acyl-sn-glycero-3-phosphate + an acyl-CoA = a 1,2-diacyl-sn-glycero-3-phosphate + CoA. It carries out the reaction 1-(9Z-octadecenoyl)-sn-glycero-3-phosphate + (9Z)-octadecenoyl-CoA = 1,2-di-(9Z-octadecenoyl)-sn-glycero-3-phosphate + CoA. The enzyme catalyses 1-(9Z-octadecenoyl)-sn-glycero-3-phosphate + (5Z,8Z,11Z,14Z)-eicosatetraenoyl-CoA = 1-(9Z)-octadecenoyl-2-(5Z,8Z,11Z,14Z)-eicosatetraenoyl-sn-glycero-3-phosphate + CoA. It catalyses the reaction (5Z,8Z,11Z,14Z)-eicosatetraenoyl-CoA + sn-glycerol 3-phosphate = 1-(5Z,8Z,11Z,14Z-eicosatetraenoyl)-sn-glycero-3-phosphate + CoA. The protein operates within phospholipid metabolism; CDP-diacylglycerol biosynthesis; CDP-diacylglycerol from sn-glycerol 3-phosphate: step 1/3. With respect to regulation, inhibited by N-ethylmaleimide (NEM). Its function is as follows. Transfers an acyl-group from acyl-ACP to the sn-1 position of glycerol-3-phosphate producing a lysophosphatidic acid (LPA), an essential step for the triacylglycerol (TAG) and glycerophospholipids. In vitro also transfers an acyl-group from acyl-ACP to the LPA producing a phosphatidic acid (PA). Prefers arachidonoyl-CoA as the acyl donor. Required for primary processing step during piRNA biosynthesis. Molecular mechanisms by which it promotes piRNA biosynthesis are unclear and do not involve its acyltransferase activity. The chain is Glycerol-3-phosphate acyltransferase 2, mitochondrial from Rattus norvegicus (Rat).